We begin with the raw amino-acid sequence, 66 residues long: Phylloseptin-S1 (66 aa).

Positions 1 to 22 (MAFLKKSLFLVLFLGLVSLSIC) are cleaved as a signal peptide. Positions 23–46 (EEEKRETEEEEHDQEEDDKSEEKR) are excised as a propeptide. The segment at 25-44 (EKRETEEEEHDQEEDDKSEE) is disordered. Acidic residues predominate over residues 30–41 (EEEEHDQEEDDK). Phenylalanine 65 carries the phenylalanine amide modification.

Expressed by the skin glands.

The protein localises to the secreted. It is found in the target cell membrane. Antimicrobial peptide with high activity against Gram-positive bacteria, low activity against Gram-negative bacteria, and moderate activity against fungi. Acts on bacterial biofilms (S.aureus) with the same potency than on bacteria. Acts by causing bacterial membrane disruption inducing leakage of the intracellular content followed by cell death. It adopts an alpha-helical amphipathic structure in membrane environments. Also shows highly potent antiparasitic activity against Leishmania species. Shows low hemolytic activity on horse and human erythrocytes (LC(50)=39 uM). Is also active on human monocytes (IC(50)=23 uM). The sequence is that of Phylloseptin-S1 from Phyllomedusa sauvagei (Sauvage's leaf frog).